The following is a 70-amino-acid chain: Small, acid-soluble spore protein I (70 aa).

This sequence belongs to the SspI family.

The protein resides in the spore core. This chain is Small, acid-soluble spore protein I, found in Bacillus licheniformis (strain ATCC 14580 / DSM 13 / JCM 2505 / CCUG 7422 / NBRC 12200 / NCIMB 9375 / NCTC 10341 / NRRL NRS-1264 / Gibson 46).